Consider the following 346-residue polypeptide: D-alanine--D-alanine ligase (346 aa).

Residues Lys-133–Lys-327 form the ATP-grasp domain. Leu-159–Tyr-211 is a binding site for ATP. The Mg(2+) site is built by Asp-284, Glu-296, and Asn-298.

It belongs to the D-alanine--D-alanine ligase family. The cofactor is Mg(2+). Requires Mn(2+) as cofactor.

The protein resides in the cytoplasm. The catalysed reaction is 2 D-alanine + ATP = D-alanyl-D-alanine + ADP + phosphate + H(+). It participates in cell wall biogenesis; peptidoglycan biosynthesis. In terms of biological role, cell wall formation. The sequence is that of D-alanine--D-alanine ligase from Campylobacter jejuni subsp. jejuni serotype O:6 (strain 81116 / NCTC 11828).